The chain runs to 177 residues: Inner membrane-spanning protein YciB (177 aa).

5 consecutive transmembrane segments (helical) span residues 22 to 42, 50 to 70, 76 to 96, 121 to 141, and 149 to 169; these read IFIASGSLIVISGLICIIHWI, ISLFSFLSVFFFGSLTIFFHN, WKITIIYIIFSLVLLISQFFT, FIWSLFFLFCAILNIYIAYYF, and FKVFGFTSLTFFLILITSIYI.

Belongs to the YciB family.

The protein localises to the cell inner membrane. Functionally, plays a role in cell envelope biogenesis, maintenance of cell envelope integrity and membrane homeostasis. This Buchnera aphidicola subsp. Acyrthosiphon pisum (strain APS) (Acyrthosiphon pisum symbiotic bacterium) protein is Inner membrane-spanning protein YciB.